Reading from the N-terminus, the 464-residue chain is Soluble pyridine nucleotide transhydrogenase (464 aa).

Residue 35-44 coordinates FAD; it reads DSRRQVGGNC.

The protein belongs to the class-I pyridine nucleotide-disulfide oxidoreductase family. FAD is required as a cofactor.

The protein localises to the cytoplasm. It catalyses the reaction NAD(+) + NADPH = NADH + NADP(+). Its function is as follows. Conversion of NADPH, generated by peripheral catabolic pathways, to NADH, which can enter the respiratory chain for energy generation. The protein is Soluble pyridine nucleotide transhydrogenase of Pseudomonas syringae pv. syringae (strain B728a).